The primary structure comprises 179 residues: Coiled-coil domain-containing protein 32 (179 aa).

Positions Asp-36–Gly-65 are disordered. Residues Glu-75–Lys-98 are a coiled coil. Residues Leu-158 to Gln-179 form a disordered region.

As to quaternary structure, interacts with AP2S1; the interaction is direct and mediates association with adaptor protein complex 2 (AP-2).

The protein localises to the membrane. Its subcellular location is the coated pit. Its function is as follows. Regulates clathrin-mediated endocytsois of cargos such as transferrin probably through the association and modulation of adaptor protein complex 2 (AP-2). Has a role in ciliogenesis. Required for proper cephalic and left/right axis development. This chain is Coiled-coil domain-containing protein 32 (Ccdc32), found in Mus musculus (Mouse).